The sequence spans 64 residues: Small ribosomal subunit protein bS21 (64 aa).

It belongs to the bacterial ribosomal protein bS21 family.

This Amoebophilus asiaticus (strain 5a2) protein is Small ribosomal subunit protein bS21.